The sequence spans 252 residues: MSRKPIIAGNWKMNKTAAEAREFIDAVKNNIPSNNLVDTVIGSPALFLEGMKKGVKGTELQVAAQNCYWEDFGAFTGETSPAALAALGVDYVIIGHSERRDYFHETDQEINKKAHAIFKHKMTPILCCGESLETYEAGKTAEWIEGQITADLKGLSAEQVSSMVIAYEPIWAIGTGKSADANIADDICGVVRATVEKLYGKEVAQAVRIQYGGSVKPENVAEYMAKENVDGALVGGASLQADSFLALLDFVK.

Position 10-12 (10-12 (NWK)) interacts with substrate. His-96 (electrophile) is an active-site residue. Glu-168 serves as the catalytic Proton acceptor. Substrate contacts are provided by residues Gly-174, Ser-214, and 235–236 (GG).

Belongs to the triosephosphate isomerase family. In terms of assembly, homodimer.

It localises to the cytoplasm. The catalysed reaction is D-glyceraldehyde 3-phosphate = dihydroxyacetone phosphate. Its pathway is carbohydrate biosynthesis; gluconeogenesis. It functions in the pathway carbohydrate degradation; glycolysis; D-glyceraldehyde 3-phosphate from glycerone phosphate: step 1/1. In terms of biological role, involved in the gluconeogenesis. Catalyzes stereospecifically the conversion of dihydroxyacetone phosphate (DHAP) to D-glyceraldehyde-3-phosphate (G3P). The sequence is that of Triosephosphate isomerase from Streptococcus mutans serotype c (strain ATCC 700610 / UA159).